Here is a 313-residue protein sequence, read N- to C-terminus: Platelet glycoprotein VI (313 aa).

Residues 1–21 (MSPASPTFFCIGLCVLQVIQT) form the signal peptide. At 22–265 (QSGPLPKPSL…FGFAHQHYAK (244 aa)) the chain is on the extracellular side. Ig-like C2-type domains are found at residues 27–105 (PKPS…DQLE) and 115–197 (PSLS…APSD). An intrachain disulfide couples C49 to C89. The N-linked (GlcNAc...) asparagine glycan is linked to N93. Cysteines 135 and 181 form a disulfide. The tract at residues 213–236 (VPTEESFPVTESSRRPSILPTNKI) is disordered. N-linked (GlcNAc...) asparagine glycosylation occurs at N244. The chain crosses the membrane as a helical span at residues 266 to 286 (GNLVRICLGATIIIILLGLLA). Residues 287–313 (EDWHSRKKCLQHRMRALQRPLPPLPLA) lie on the Cytoplasmic side of the membrane.

Associated with Fc receptor gamma chain. The GPVI:FcRgamma complex is associated with the Src kinase family FYN and LYN. Interacts with TRAF4. Interacts with COL1A1, but not with COL4A4. Megakaryocytes and platelets.

The protein localises to the cell membrane. Its function is as follows. Collagen receptor involved in collagen-induced platelet adhesion and activation. Plays a key role in platelet procoagulant activity and subsequent thrombin and fibrin formation. This procoagulant function may contribute to arterial and venous thrombus formation. The signaling pathway involves the FcR gamma-chain, the Src kinases (likely FYN or LYN) and SYK, the adapter protein LAT and leads to the activation of PLCG2. The polypeptide is Platelet glycoprotein VI (Mus musculus (Mouse)).